Here is a 506-residue protein sequence, read N- to C-terminus: 2,3-bisphosphoglycerate-independent phosphoglycerate mutase (506 aa).

Mn(2+) contacts are provided by Asp-12 and Ser-63. The Phosphoserine intermediate role is filled by Ser-63. Substrate-binding positions include His-122, 151-152 (RD), Arg-182, Arg-188, 253-256 (RADR), and Lys-323. Mn(2+) is bound by residues Asp-390, His-394, Asp-432, His-433, and His-451.

The protein belongs to the BPG-independent phosphoglycerate mutase family. As to quaternary structure, monomer. The cofactor is Mn(2+).

The enzyme catalyses (2R)-2-phosphoglycerate = (2R)-3-phosphoglycerate. Its pathway is carbohydrate degradation; glycolysis; pyruvate from D-glyceraldehyde 3-phosphate: step 3/5. Functionally, catalyzes the interconversion of 2-phosphoglycerate and 3-phosphoglycerate. This chain is 2,3-bisphosphoglycerate-independent phosphoglycerate mutase, found in Wolbachia pipientis wMel.